The primary structure comprises 419 residues: Adenylosuccinate synthetase (419 aa).

GTP-binding positions include 12–18 and 40–42; these read GDEGKGK and GHT. Catalysis depends on D13, which acts as the Proton acceptor. The Mg(2+) site is built by D13 and G40. Residues 13–16, 38–41, T128, R142, Q220, T235, and R299 contribute to the IMP site; these read DEGK and NAGH. The Proton donor role is filled by H41. 295 to 301 provides a ligand contact to substrate; that stretch reads SITKRPR. Residues R301, 327 to 329, and 407 to 409 each bind GTP; these read KSD and SLG.

Belongs to the adenylosuccinate synthetase family. In terms of assembly, homodimer. Mg(2+) serves as cofactor.

It is found in the cytoplasm. The catalysed reaction is IMP + L-aspartate + GTP = N(6)-(1,2-dicarboxyethyl)-AMP + GDP + phosphate + 2 H(+). The protein operates within purine metabolism; AMP biosynthesis via de novo pathway; AMP from IMP: step 1/2. Plays an important role in the de novo pathway of purine nucleotide biosynthesis. Catalyzes the first committed step in the biosynthesis of AMP from IMP. This is Adenylosuccinate synthetase from Azobacteroides pseudotrichonymphae genomovar. CFP2.